The following is a 757-amino-acid chain: Primary amine oxidase (757 aa).

A signal peptide spans Met1–Ala30. Substrate is bound by residues Tyr411–Leu422 and Val493–Tyr498. Residue Asp413 is the Proton acceptor of the active site. Tyr496 functions as the Schiff-base intermediate with substrate; via topaquinone in the catalytic mechanism. Residue Tyr496 is modified to 2',4',5'-topaquinone. 2 residues coordinate Cu cation: His554 and His556. Residues Asp563, Leu564, Asp565, Glu603, Tyr697, Asp700, Glu702, Asp708, and Ala709 each contribute to the Ca(2+) site. Asp563 is a Mn(2+) binding site. Asp565 provides a ligand contact to Mn(2+). The segment at Pro680–Asn701 is disordered. Position 708 (Asp708) interacts with Mn(2+). Cu cation is bound at residue His719.

This sequence belongs to the copper/topaquinone oxidase family. As to quaternary structure, homodimer. Requires Cu cation as cofactor. The cofactor is Zn(2+). It depends on Ca(2+) as a cofactor. L-topaquinone is required as a cofactor. Mn(2+) serves as cofactor. Topaquinone (TPQ) is generated by copper-dependent autoxidation of a specific tyrosyl residue.

Its subcellular location is the periplasm. It carries out the reaction a primary methyl amine + O2 + H2O = an aldehyde + H2O2 + NH4(+). The catalysed reaction is 2-phenylethylamine + O2 + H2O = 2-phenylacetaldehyde + H2O2 + NH4(+). The protein operates within amino-acid degradation; L-phenylalanine degradation; phenylacetate from L-phenylalanine: step 2/3. With respect to regulation, inhibited by 2-hydrazinopyridine. The enzyme prefers aromatic over aliphatic amines. This is Primary amine oxidase (tynA) from Escherichia coli (strain K12).